Here is a 376-residue protein sequence, read N- to C-terminus: MASYPGHQHASAFDQAARSRGHSNRRTALRPRRQQEATEVRPEQKMPTLLRVYIDGPHGMGKTTTTQLLVALGSRDDIVYVPEPMTYWRVLGASETIANIYTTQHRLDQGEISAGDAAVVMTSAQITMGMPYAVTDAVLAPHIGGEAGSSHAPPPALTLIFDRHPIAALLCYPAARYLMGSMTPQAVLAFVALIPPTLPGTNIVLGALPEDRHIDRLAKRQRPGERLDLAMLAAIRRVYGLLANTVRYLQGGGSWREDWGQLSGTAVPPQGAEPQSNAGPRPHIGDTLFTLFRAPELLAPNGDLYNVFAWALDVLAKRLRPMHVFILDYDQSPAGCRDALLQLTSGMIQTHVTTPGSIPTICDLARTFAREMGEAN.

A disordered region spans residues 1 to 44 (MASYPGHQHASAFDQAARSRGHSNRRTALRPRRQQEATEVRPEQ). A compositionally biased stretch (basic residues) spans 19–32 (SRGHSNRRTALRPR). Residues 33 to 44 (RQQEATEVRPEQ) are compositionally biased toward basic and acidic residues. 56 to 63 (GPHGMGKT) serves as a coordination point for ATP. E83 serves as the catalytic Proton acceptor. Y101 and Q125 together coordinate substrate. R216 is an ATP binding site. A substrate-binding site is contributed by R222. The tract at residues 260 to 280 (GQLSGTAVPPQGAEPQSNAGP) is disordered.

It belongs to the herpesviridae thymidine kinase family. As to quaternary structure, homodimer.

It catalyses the reaction thymidine + ATP = dTMP + ADP + H(+). Catalyzes the transfer of the gamma-phospho group of ATP to thymidine to generate dTMP in the salvage pathway of pyrimidine synthesis. The dTMP serves as a substrate for DNA polymerase during viral DNA replication. Allows the virus to be reactivated and to grow in non-proliferative cells lacking a high concentration of phosphorylated nucleic acid precursors. The chain is Thymidine kinase from Human herpesvirus 1 (strain SC16) (HHV-1).